The primary structure comprises 167 residues: HVA22-like protein b (167 aa).

3 consecutive transmembrane segments (helical) span residues 18-38 (VIAG…RAIE), 47-67 (QWLT…TFFR), and 68-88 (LLEW…WLVL).

This sequence belongs to the DP1 family. Predominantly expressed in flower buds.

The protein resides in the membrane. The chain is HVA22-like protein b (HVA22B) from Arabidopsis thaliana (Mouse-ear cress).